The sequence spans 110 residues: Large ribosomal subunit protein uL22 (110 aa).

The protein belongs to the universal ribosomal protein uL22 family. Part of the 50S ribosomal subunit.

In terms of biological role, this protein binds specifically to 23S rRNA; its binding is stimulated by other ribosomal proteins, e.g. L4, L17, and L20. It is important during the early stages of 50S assembly. It makes multiple contacts with different domains of the 23S rRNA in the assembled 50S subunit and ribosome. The globular domain of the protein is located near the polypeptide exit tunnel on the outside of the subunit, while an extended beta-hairpin is found that lines the wall of the exit tunnel in the center of the 70S ribosome. In Syntrophobacter fumaroxidans (strain DSM 10017 / MPOB), this protein is Large ribosomal subunit protein uL22.